We begin with the raw amino-acid sequence, 315 residues long: Mycothiol acetyltransferase (315 aa).

2 consecutive N-acetyltransferase domains span residues Leu-4–Arg-141 and Val-152–Asn-315. Glu-36 is a 1D-myo-inositol 2-(L-cysteinylamino)-2-deoxy-alpha-D-glucopyranoside binding site. Residues Leu-80–Val-82 and Arg-88–Thr-93 contribute to the acetyl-CoA site. 1D-myo-inositol 2-(L-cysteinylamino)-2-deoxy-alpha-D-glucopyranoside-binding residues include Glu-179, Lys-224, and Glu-234. Acetyl-CoA contacts are provided by residues Leu-238–Val-240 and Gln-245–Gln-251. 1D-myo-inositol 2-(L-cysteinylamino)-2-deoxy-alpha-D-glucopyranoside is bound at residue Tyr-282. Residue Asn-287–Arg-292 coordinates acetyl-CoA.

This sequence belongs to the acetyltransferase family. MshD subfamily. As to quaternary structure, monomer.

It catalyses the reaction 1D-myo-inositol 2-(L-cysteinylamino)-2-deoxy-alpha-D-glucopyranoside + acetyl-CoA = mycothiol + CoA + H(+). Catalyzes the transfer of acetyl from acetyl-CoA to desacetylmycothiol (Cys-GlcN-Ins) to form mycothiol. The protein is Mycothiol acetyltransferase of Mycobacterium bovis (strain ATCC BAA-935 / AF2122/97).